Consider the following 227-residue polypeptide: Esterase OVCA2 (227 aa).

The interval 44–68 is disordered; the sequence is GPHPVPDPPGPEGARSDFGSCPPEE. Catalysis depends on charge relay system residues Ser119, Asp179, and His206.

The protein belongs to the LovG family. Post-translationally, proteolytically degraded in response to RA and 4HPR treatment in a time- and dose-dependent manner in the promyelocytic leukemia cell line HL-60. In terms of tissue distribution, ubiquitously expressed.

It catalyses the reaction a carboxylic ester + H2O = an alcohol + a carboxylate + H(+). Its function is as follows. Exhibits ester hydrolase activity with a strong preference for long-chain alkyl ester substrates and high selectivity against a variety of short, branched, and substituted esters. Is able to hydrolyze ester bonds within a wide range of p-nitrophenyl derivatives (C2-C14) in vitro, with a strong preference toward substrates of &gt;8 carbons. This is Esterase OVCA2 from Homo sapiens (Human).